Reading from the N-terminus, the 159-residue chain is Small ribosomal subunit protein uS7 (159 aa).

It belongs to the universal ribosomal protein uS7 family. As to quaternary structure, part of the 30S ribosomal subunit. Contacts proteins S9 and S11.

Its function is as follows. One of the primary rRNA binding proteins, it binds directly to 16S rRNA where it nucleates assembly of the head domain of the 30S subunit. Is located at the subunit interface close to the decoding center, probably blocks exit of the E-site tRNA. This chain is Small ribosomal subunit protein uS7, found in Rickettsia felis (strain ATCC VR-1525 / URRWXCal2) (Rickettsia azadi).